We begin with the raw amino-acid sequence, 418 residues long: ATP-dependent Clp protease ATP-binding subunit ClpX (418 aa).

The 54-residue stretch at 1–54 folds into the ClpX-type ZB domain; that stretch reads MTRKDDESDQFFCSFCGKNQKEVKKLIAGPSVYICNECVSLCEEIIEDEDKESL. Zn(2+) is bound by residues Cys-13, Cys-16, Cys-35, and Cys-38. Residue 120–127 coordinates ATP; the sequence is PTGCGKTL.

It belongs to the ClpX chaperone family. Component of the ClpX-ClpP complex. Forms a hexameric ring that, in the presence of ATP, binds to fourteen ClpP subunits assembled into a disk-like structure with a central cavity, resembling the structure of eukaryotic proteasomes.

Functionally, ATP-dependent specificity component of the Clp protease. It directs the protease to specific substrates. Can perform chaperone functions in the absence of ClpP. This chain is ATP-dependent Clp protease ATP-binding subunit ClpX, found in Desulforapulum autotrophicum (strain ATCC 43914 / DSM 3382 / VKM B-1955 / HRM2) (Desulfobacterium autotrophicum).